The primary structure comprises 489 residues: CDK5RAP3 protein homolog (489 aa).

It belongs to the CDK5RAP3 family.

Substrate adapter of E3 ligase complexes mediating ufmylation, the covalent attachment of the ubiquitin-like modifier UFM1 to substrate proteins, and which is involved in various processes, such as ribosome recycling and reticulophagy (also called ER-phagy). This chain is CDK5RAP3 protein homolog, found in Caenorhabditis elegans.